The following is a 436-amino-acid chain: Bifunctional protein GlmU (436 aa).

A pyrophosphorylase region spans residues 1–225; sequence MNNNTSIIIL…EQNFMGINDK (225 aa). UDP-N-acetyl-alpha-D-glucosamine-binding positions include 10 to 13, K24, Q76, and 83 to 84; these read LAAG and GT. Residue D104 participates in Mg(2+) binding. 4 residues coordinate UDP-N-acetyl-alpha-D-glucosamine: G137, E151, N166, and N223. Residue N223 coordinates Mg(2+). The linker stretch occupies residues 226-246; that stretch reads FQLSIAEKIMQDEIKQNLMKA. The segment at 247–436 is N-acetyltransferase; sequence GVLMRMPESI…KFFGKDDVKK (190 aa). 2 residues coordinate UDP-N-acetyl-alpha-D-glucosamine: R310 and K327. H338 (proton acceptor) is an active-site residue. Positions 341 and 352 each coordinate UDP-N-acetyl-alpha-D-glucosamine. Residues 361–362, S380, A398, and R415 contribute to the acetyl-CoA site; that span reads NY.

This sequence in the N-terminal section; belongs to the N-acetylglucosamine-1-phosphate uridyltransferase family. It in the C-terminal section; belongs to the transferase hexapeptide repeat family. Homotrimer. The cofactor is Mg(2+).

The protein resides in the cytoplasm. It carries out the reaction alpha-D-glucosamine 1-phosphate + acetyl-CoA = N-acetyl-alpha-D-glucosamine 1-phosphate + CoA + H(+). The catalysed reaction is N-acetyl-alpha-D-glucosamine 1-phosphate + UTP + H(+) = UDP-N-acetyl-alpha-D-glucosamine + diphosphate. It participates in nucleotide-sugar biosynthesis; UDP-N-acetyl-alpha-D-glucosamine biosynthesis; N-acetyl-alpha-D-glucosamine 1-phosphate from alpha-D-glucosamine 6-phosphate (route II): step 2/2. It functions in the pathway nucleotide-sugar biosynthesis; UDP-N-acetyl-alpha-D-glucosamine biosynthesis; UDP-N-acetyl-alpha-D-glucosamine from N-acetyl-alpha-D-glucosamine 1-phosphate: step 1/1. Its pathway is bacterial outer membrane biogenesis; LPS lipid A biosynthesis. Catalyzes the last two sequential reactions in the de novo biosynthetic pathway for UDP-N-acetylglucosamine (UDP-GlcNAc). The C-terminal domain catalyzes the transfer of acetyl group from acetyl coenzyme A to glucosamine-1-phosphate (GlcN-1-P) to produce N-acetylglucosamine-1-phosphate (GlcNAc-1-P), which is converted into UDP-GlcNAc by the transfer of uridine 5-monophosphate (from uridine 5-triphosphate), a reaction catalyzed by the N-terminal domain. The polypeptide is Bifunctional protein GlmU (Campylobacter concisus (strain 13826)).